Consider the following 280-residue polypeptide: Pantothenate synthetase (280 aa).

Residue 30-37 participates in ATP binding; sequence MGYLHEGH. Histidine 37 functions as the Proton donor in the catalytic mechanism. Glutamine 61 provides a ligand contact to (R)-pantoate. Residue glutamine 61 participates in beta-alanine binding. Residue 147–150 coordinates ATP; it reads GQKD. (R)-pantoate is bound at residue glutamine 153. ATP is bound by residues valine 176 and 184–187; that span reads MSSR.

It belongs to the pantothenate synthetase family. As to quaternary structure, homodimer.

The protein localises to the cytoplasm. The catalysed reaction is (R)-pantoate + beta-alanine + ATP = (R)-pantothenate + AMP + diphosphate + H(+). Its pathway is cofactor biosynthesis; (R)-pantothenate biosynthesis; (R)-pantothenate from (R)-pantoate and beta-alanine: step 1/1. In terms of biological role, catalyzes the condensation of pantoate with beta-alanine in an ATP-dependent reaction via a pantoyl-adenylate intermediate. This chain is Pantothenate synthetase, found in Fervidobacterium nodosum (strain ATCC 35602 / DSM 5306 / Rt17-B1).